Consider the following 33-residue polypeptide: Beta-amanitin proprotein (33 aa).

Positions 1-10 are excised as a propeptide; sequence MSDINATRLP. Residues 11–18 constitute a cross-link (cyclopeptide (Ile-Pro)); sequence IWGIGCDP. The 2'-cysteinyl-6'-hydroxytryptophan sulfoxide (Trp-Cys) cross-link spans 12–16; sequence WGIGC. A propeptide spanning residues 19 to 33 is cleaved from the precursor; sequence CVGDDVTAVLTRGEA.

Belongs to the MSDIN fungal toxin family. Processed by the macrocyclase-peptidase enzyme POPB to yield a toxic cyclic decapeptide. POPB first removes 10 residues from the N-terminus. Conformational trapping of the remaining peptide forces the enzyme to release this intermediate rather than proceed to macrocyclization. The enzyme rebinds the remaining peptide in a different conformation and catalyzes macrocyclization of the N-terminal 8 residues.

Functionally, toxin belonging to the bicyclic octapeptides amatoxins that acts by binding non-competitively to RNA polymerase II and greatly slowing the elongation of transcripts from target promoters. The chain is Beta-amanitin proprotein from Amanita pallidorosea.